The following is a 446-amino-acid chain: Anthranilate N-benzoyltransferase protein 2 (446 aa).

Residues His-164 and Asp-393 each act as proton acceptor in the active site.

The protein belongs to the plant acyltransferase family. Post-translationally, N-terminus is blocked.

The catalysed reaction is anthranilate + benzoyl-CoA = N-benzoylanthranilate + CoA. It functions in the pathway phytoalexin biosynthesis; methoxydianthramide B biosynthesis. Its function is as follows. Catalyzes the formation of N-benzoylanthranilate, in the course of methoxydianthramide B, a phytoalexin. Phytoalexins are produced in response to infection by parasites, and are essential for the expression of disease resistance. This chain is Anthranilate N-benzoyltransferase protein 2 (HCBT2), found in Dianthus caryophyllus (Carnation).